Here is a 319-residue protein sequence, read N- to C-terminus: CBBY-like protein (319 aa).

The transit peptide at 1–65 directs the protein to the chloroplast; it reads MATVKISLSL…YRSSRSVGVT (65 aa). D82 (nucleophile) is an active-site residue. Mg(2+) contacts are provided by D82 and D84. D82 lines the substrate pocket. The Proton donor role is filled by D84. Substrate-binding positions include E91, 125-129, 158-161, and 198-204; these read GGKER, HKQK, and STSNEKA. Residue D258 coordinates Mg(2+).

Belongs to the HAD-like hydrolase superfamily. DOG/GPP family. Mg(2+) serves as cofactor.

Its subcellular location is the plastid. The protein resides in the chloroplast. It catalyses the reaction D-xylulose 1,5-bisphosphate + H2O = D-xylulose 5-phosphate + phosphate. Its function is as follows. Highly selective xylulose-1,5-bisphosphate (XuBP) phosphatase. Also shows activity towards ribulose-1,5-bisphosphate (RuBP) and fructose-1,6-bisphosphate (FBP), but not towards fructose-6-phosphate (F6P) or ribulose-5-phosphate (Ru5P). Degrades xylulose-1,5-bisphosphate, a potent inhibitor of rubisco produced by the rubisco itself. This is CBBY-like protein from Arabidopsis thaliana (Mouse-ear cress).